The following is a 332-amino-acid chain: Aspartate carbamoyltransferase catalytic subunit (332 aa).

Carbamoyl phosphate is bound by residues Arg78 and Thr79. Lys106 is a binding site for L-aspartate. Residues Arg128, His156, and Gln159 each contribute to the carbamoyl phosphate site. Residues Arg189 and Arg243 each contribute to the L-aspartate site. The carbamoyl phosphate site is built by Gly284 and Pro285.

It belongs to the aspartate/ornithine carbamoyltransferase superfamily. ATCase family. In terms of assembly, heterododecamer (2C3:3R2) of six catalytic PyrB chains organized as two trimers (C3), and six regulatory PyrI chains organized as three dimers (R2).

The enzyme catalyses carbamoyl phosphate + L-aspartate = N-carbamoyl-L-aspartate + phosphate + H(+). It functions in the pathway pyrimidine metabolism; UMP biosynthesis via de novo pathway; (S)-dihydroorotate from bicarbonate: step 2/3. Catalyzes the condensation of carbamoyl phosphate and aspartate to form carbamoyl aspartate and inorganic phosphate, the committed step in the de novo pyrimidine nucleotide biosynthesis pathway. The protein is Aspartate carbamoyltransferase catalytic subunit of Caulobacter vibrioides (strain ATCC 19089 / CIP 103742 / CB 15) (Caulobacter crescentus).